A 284-amino-acid polypeptide reads, in one-letter code: Pheromone-regulated membrane protein 4 (284 aa).

Residues 20–38 (IISLTLVLLGVFSFLLLTW) traverse the membrane as a helical segment. The 116-residue stretch at 157–272 (RTDFLDIIRT…PLLKSEARGN (116 aa)) folds into the Glutaredoxin domain.

Its subcellular location is the membrane. The protein is Pheromone-regulated membrane protein 4 (PRM4) of Saccharomyces cerevisiae (strain ATCC 204508 / S288c) (Baker's yeast).